We begin with the raw amino-acid sequence, 350 residues long: Salicylate decarboxylase (350 aa).

The protein belongs to the metallo-dependent hydrolases superfamily. Homotetramer.

It catalyses the reaction salicylate + H(+) = phenol + CO2. Its activity is regulated as follows. Inhibited by AgNO(3), HgCl(2), p-chloromercuribenzoic acid and NiCl(2). Functionally, reversibly catalyzes the regioselective carboxylation of phenol to form salicylic acid. Involved in a pathway for the degradation of salicylate via phenol. Also catalyzes the decarboxylation of beta-resorcylic acid (2,4-dihydroxybenzoic acid) into resorcinol (1,3-dihydroxybenzene), gamma-resorcylic acid (2,6-dihydroxybenzoic acid) into resorcinol, 2,3-dihydroxybenzoic acid into catechol (1,2-dihydroxybenzene), and 4-aminosalicylic acid into 3-aminophenol. This Cutaneotrichosporon moniliiforme (Yeast) protein is Salicylate decarboxylase.